An 844-amino-acid polypeptide reads, in one-letter code: MFSSESRPTVKLPDKWAKKRCFFQLLSSLSTTLKKLCSSSSHCSGFHLIIRPFQRFFGLEKMYRSTKGASKARRDQINAEIRSLKELLPISDADKARLSYLHIMSLACIYTRKSVFFSQAAAGHGMSGSLLSLPELSDLLHTLPGFLLVLTSEGKLLYLSDNVAEHLGHSMVDLVAQSDSVYDIIDPVDHFIMRGNLVPITTPDTDRLFRCRFSTSKFVRRQGSGNKQAIVRARCLPPPYHASPYWTSNPVWVCFCSPLEASMPQLSTSRNPLPTPPAEQSFLLSCFQSQHSRDMRIHTVQDSVSVYLGYDIETLRSRSWYSLIHPRDLSHASAQHCTLLHNGGERQVEMVVQVEAADHSWIWLYIVLQLETGEYPINSHNYVISESEAWSVRQQLHSEQNQLALLYQESRQSSDPLSSPDQVFTPSSSGLSSQSFDFSFITSGRSSSEELPGTSAPSSMTFDPLEGEEIDPQSHGGGHQMWRSAMTIAPEHLSNINLSTVPQSQVAPPPLPPFKAPPKRQRSEEFICTPPYTPRLSGGSFIFNDETLRPSDHSKSAKMRQSITSATNIGPAQPCRKRLYETLPPTPDSPGSDECILMALPEIRGPLYVDVPHLPFHAPPEGLLTPEASPTKKPCLSFFPREDETERERMEISLLAQYISTLAEGFCHNHPQGASAPPHHANSSLAHIDVLMFEEKAVDDIPLPNLPSPSPVPPSPYSSVPSYSQCRSSPVQEEAAVTLIGVNHLCSVQLTHCNRMTEGGLQDGERPDEDMEMMSSQRSSEAPALTPALPCAQSLLEELVTMEPVFGAAVPMTPADRQQDELYQLPHQGGPQMFYQDGTGDHMF.

The segment at 61–74 is basic motif; degenerate; that stretch reads KMYRSTKGASKARR. A bHLH domain is found at 61 to 114; sequence KMYRSTKGASKARRDQINAEIRSLKELLPISDADKARLSYLHIMSLACIYTRKS. The segment at 75–114 is helix-loop-helix motif; sequence DQINAEIRSLKELLPISDADKARLSYLHIMSLACIYTRKS. PAS domains are found at residues 132-190 and 294-343; these read SLPE…PVDH and DMRI…LHNG. Residues 410 to 422 show a composition bias toward polar residues; sequence SRQSSDPLSSPDQ. Disordered regions lie at residues 410–432, 444–479, 702–725, and 757–784; these read SRQS…SGLS, GRSS…GGGH, PLPN…SYSQ, and TEGG…EAPA. The segment covering 704 to 716 has biased composition (pro residues); it reads PNLPSPSPVPPSP.

As to quaternary structure, efficient DNA binding requires dimerization with another bHLH protein.

It localises to the nucleus. Its function is as follows. Transcription factor expressed in neurons of the brain that regulates the excitatory-inhibitory balance within neural circuits and is required for contextual memory in the hippocampus. Plays a key role in the structural and functional plasticity of neurons. Acts as an early-response transcription factor in both excitatory and inhibitory neurons, where it induces distinct but overlapping sets of late-response genes in these two types of neurons, allowing the synapses that form on inhibitory and excitatory neurons to be modified by neuronal activity in a manner specific to their function within a circuit, thereby facilitating appropriate circuit responses to sensory experience. In Danio rerio (Zebrafish), this protein is Neuronal PAS domain-containing protein 4B (npas4b).